A 256-amino-acid polypeptide reads, in one-letter code: 5'-nucleotidase SurE (256 aa).

Residues D8, D9, S40, and N92 each coordinate a divalent metal cation.

It belongs to the SurE nucleotidase family. A divalent metal cation is required as a cofactor.

It is found in the cytoplasm. The enzyme catalyses a ribonucleoside 5'-phosphate + H2O = a ribonucleoside + phosphate. Functionally, nucleotidase that shows phosphatase activity on nucleoside 5'-monophosphates. The protein is 5'-nucleotidase SurE of Sinorhizobium fredii (strain NBRC 101917 / NGR234).